Consider the following 265-residue polypeptide: Energy-coupling factor transporter transmembrane protein EcfT (265 aa).

The next 5 helical transmembrane spans lie at 32–52, 72–92, 115–135, 150–170, and 245–265; these read MVLL…VFII, LVII…GRVI, LIML…IALT, VPAH…PTLM, and LAAF…RFIW.

The protein belongs to the energy-coupling factor EcfT family. Forms a stable energy-coupling factor (ECF) transporter complex composed of 2 membrane-embedded substrate-binding proteins (S component), 2 ATP-binding proteins (A component) and 2 transmembrane proteins (T component). May be able to interact with more than 1 S component at a time.

It is found in the cell membrane. In terms of biological role, transmembrane (T) component of an energy-coupling factor (ECF) ABC-transporter complex. Unlike classic ABC transporters this ECF transporter provides the energy necessary to transport a number of different substrates. The chain is Energy-coupling factor transporter transmembrane protein EcfT from Thermosediminibacter oceani (strain ATCC BAA-1034 / DSM 16646 / JW/IW-1228P).